Reading from the N-terminus, the 987-residue chain is MAADLCWLSLLLASLALSGAVYEDQVGKFDWRQEYVGRIKFASLESGLGAKKLIAVTDKNIIAALNSRTGDLLWRHVDKDTSEGTVDALMMIGQDAITVSGGRLLRSWETNIGALNWEAALEPGSFQAVSFAGSQDTARYVAVLKNSALSLYFLSNGHLKWSESLPESDTVQYQLLYSPYKGSVHVVGLVPHSHLTILTFSLEDGSISHQVRVLTPWLRTLHGTCGVIGEGVLVCGDVPMASVHIVSLLSGEETTRYSVQSLDIELAEDPTQLDVITAPQNGIGGSLSQFFLQIAPRRFLLMHYHDGVLTPLRDFSQVSLVNFATTGEKTVVAVMQCKTEGNPKSGAESEYLTGQNCAQEPWYCPGHTYSINLYMADSGRRLLETTMSFTLDQICVRPDSFYLQTFLRKDDSVGYRALVQTEDNQLLFLQQPGKLIWLREESLADVVTMETVDLPLTGAQAELEGEFGKKADGLIGMVLKRLSSQLILLQSWSAHLWKMFCDARKPRSQIRNEINVDTLARDDFNLQKMMVMVTASGKLFGIESSSGSILWKFYLHGVHPGSSFKLLVQRTTAHFPHPPQCTLLVKDKVTEKSAMYVFNPIFGKLSQLAPPPLQRPILQSLLLPIMDNDYAKVLLLLDDQHKVIAFPATKYVLQQLQELHSTIFFYLVDVEKGKLSGLRLNKDLSTEEIWEVLLPADQQRITVVKGKRSNEHVHSQGRVMGDRSVLYKYLNPNLLVLVTESTDTHPERCFIGIYLIDGVTGRIIHSSVQRRARGPVQIIHSENWVVYQYWNSKARRNELTVLELYEGTEQYNSTNFSSLDRPLLPHVLQQSYIFPSAIRAMQATITERGITSRHILIGLPSGAILSLPKALLDPRRPEIPNEYTREENLIPYTPDIQIHAERFINYNQTISRMRGIYTAPSGLESTCLVVAYGLDLYQTRVYPSKQFDVLKDDYDYILISSVLIGLVFATMITKRLAQVKLLNRAWR.

An N-terminal signal peptide occupies residues 1 to 21 (MAADLCWLSLLLASLALSGAV). Topologically, residues 22–956 (YEDQVGKFDW…FDVLKDDYDY (935 aa)) are lumenal. Disulfide bonds link Cys225/Cys235 and Cys337/Cys364. Asn812, Asn815, and Asn907 each carry an N-linked (GlcNAc...) asparagine glycan. A helical membrane pass occupies residues 957–977 (ILISSVLIGLVFATMITKRLA). Residues 978–987 (QVKLLNRAWR) lie on the Cytoplasmic side of the membrane.

Belongs to the EMC1 family. As to quaternary structure, component of the ER membrane protein complex (EMC).

The protein resides in the endoplasmic reticulum membrane. Its function is as follows. Part of the endoplasmic reticulum membrane protein complex (EMC) that enables the energy-independent insertion into endoplasmic reticulum membranes of newly synthesized membrane proteins. Preferentially accommodates proteins with transmembrane domains that are weakly hydrophobic or contain destabilizing features such as charged and aromatic residues. Involved in the cotranslational insertion of multi-pass membrane proteins in which stop-transfer membrane-anchor sequences become ER membrane spanning helices. It is also required for the post-translational insertion of tail-anchored/TA proteins in endoplasmic reticulum membranes. By mediating the proper cotranslational insertion of N-terminal transmembrane domains in an N-exo topology, with translocated N-terminus in the lumen of the ER, controls the topology of multi-pass membrane proteins like the G protein-coupled receptors. By regulating the insertion of various proteins in membranes, it is indirectly involved in many cellular processes. In Xenopus laevis (African clawed frog), this protein is ER membrane protein complex subunit 1 (emc1).